Here is a 512-residue protein sequence, read N- to C-terminus: Citrate synthase (512 aa).

Catalysis depends on residues histidine 288, histidine 327, and aspartate 383. The segment at 483-512 is disordered; the sequence is AIPKTATGSKSQLSASIEQSFGEKISPQSH. Polar residues predominate over residues 488–501; sequence ATGSKSQLSASIEQ.

This sequence belongs to the citrate synthase family.

Its subcellular location is the cytoplasm. The enzyme catalyses oxaloacetate + acetyl-CoA + H2O = citrate + CoA + H(+). Its pathway is carbohydrate metabolism; tricarboxylic acid cycle; isocitrate from oxaloacetate: step 1/2. The polypeptide is Citrate synthase (gltA) (Dictyostelium discoideum (Social amoeba)).